The primary structure comprises 239 residues: Pyridoxine 5'-phosphate synthase (239 aa).

A 3-amino-2-oxopropyl phosphate-binding site is contributed by N9. Residue 11-12 (DH) participates in 1-deoxy-D-xylulose 5-phosphate binding. R20 is a 3-amino-2-oxopropyl phosphate binding site. H45 acts as the Proton acceptor in catalysis. R47 and H52 together coordinate 1-deoxy-D-xylulose 5-phosphate. E72 functions as the Proton acceptor in the catalytic mechanism. Residue T102 participates in 1-deoxy-D-xylulose 5-phosphate binding. The Proton donor role is filled by H189. Residues G190 and 211 to 212 (GH) contribute to the 3-amino-2-oxopropyl phosphate site.

It belongs to the PNP synthase family. As to quaternary structure, homooctamer; tetramer of dimers.

It localises to the cytoplasm. The catalysed reaction is 3-amino-2-oxopropyl phosphate + 1-deoxy-D-xylulose 5-phosphate = pyridoxine 5'-phosphate + phosphate + 2 H2O + H(+). It participates in cofactor biosynthesis; pyridoxine 5'-phosphate biosynthesis; pyridoxine 5'-phosphate from D-erythrose 4-phosphate: step 5/5. In terms of biological role, catalyzes the complicated ring closure reaction between the two acyclic compounds 1-deoxy-D-xylulose-5-phosphate (DXP) and 3-amino-2-oxopropyl phosphate (1-amino-acetone-3-phosphate or AAP) to form pyridoxine 5'-phosphate (PNP) and inorganic phosphate. This chain is Pyridoxine 5'-phosphate synthase, found in Ehrlichia chaffeensis (strain ATCC CRL-10679 / Arkansas).